Consider the following 384-residue polypeptide: Anhydro-N-acetylmuramic acid kinase (384 aa).

12–19 is an ATP binding site; that stretch reads GTSLDGVD.

The protein belongs to the anhydro-N-acetylmuramic acid kinase family.

It catalyses the reaction 1,6-anhydro-N-acetyl-beta-muramate + ATP + H2O = N-acetyl-D-muramate 6-phosphate + ADP + H(+). The protein operates within amino-sugar metabolism; 1,6-anhydro-N-acetylmuramate degradation. It functions in the pathway cell wall biogenesis; peptidoglycan recycling. Catalyzes the specific phosphorylation of 1,6-anhydro-N-acetylmuramic acid (anhMurNAc) with the simultaneous cleavage of the 1,6-anhydro ring, generating MurNAc-6-P. Is required for the utilization of anhMurNAc either imported from the medium or derived from its own cell wall murein, and thus plays a role in cell wall recycling. The chain is Anhydro-N-acetylmuramic acid kinase from Cronobacter sakazakii (strain ATCC BAA-894) (Enterobacter sakazakii).